A 692-amino-acid chain; its full sequence is Small conductance calcium-activated potassium channel-like protein 3 (692 aa).

Residues 270–290 (SLYLALFGVILMLVESEITAE) traverse the membrane as a helical segment. A helical membrane pass occupies residues 313–333 (TIALLYHIILYHLNDIVLELV). The helical transmembrane segment at 349–369 (VIQFCIEFICCGICPLPGSGE) threads the bilayer. The helical transmembrane segment at 401–421 (VILSCFMLCRSYLFARFMVLH) threads the bilayer. Residues 455 to 475 (PVLFLTTFTFIFWIIMSWMFV) form a helical membrane-spanning segment. The segment at residues 492-512 (YSNSLWFIAITFMLNGYGDIV) is an intramembrane region (pore-forming). Residues 520 to 540 (FIAIFVGVVGAVISSILIAVI) traverse the membrane as a helical segment. A compositionally biased stretch (polar residues) spans 667-683 (HSTPNVPHLQGLTSSPV). The tract at residues 667–692 (HSTPNVPHLQGLTSSPVPSDRYDNRF) is disordered.

This sequence belongs to the potassium channel KCNN family. SK subfamily. Heterooligomer.

The protein localises to the membrane. Forms a voltage-independent potassium channel activated by intracellular calcium. This Caenorhabditis elegans protein is Small conductance calcium-activated potassium channel-like protein 3 (kcnl-3).